A 587-amino-acid polypeptide reads, in one-letter code: MATPPYPEDEHSRQAYVDQLGLLEEGADEVFEEILAAATSYFQTPIALISILDHQRQWFRASIGLDIRQTPRRDSFCAYAILGKGVFEVADATLDPRFRDNPYVQGEPRIRFYAGAPLATAEGLNLGSLCVIDREPRGPLAERDVAMLEHFARLVMARIHTLRSTNYIDEPTGLYNRLRLQEDVSLRLQRDGALTVIAADLLPLALLNTIIRTLGYPFSNDLMLEARDRIRAELPDFTLYKISPTRFGLLLPRQQQEETESVCLRLLRAFESPVVCRGIPIKANVGLGVLPLADDTLDGDQDWLRLVVSAADDARDRGVGWARYNPPLDQAQQRAFTLLTSLSQAIGTEEGFHLVYQPKIDLPTGRCTGVEALLRWRHPQLGFVSPAEFVPLAEKTALMRPLSDWVLRHAMAQLAQWNARNIPLRLAINVSASDMEDSSFLEEAVRLAKTYDIDLSALELEFTESVLIRDASAVGSVLLRARELGMGIAVDDFGTGYSNWTYLRDLPITAIKLDQSFTRDLAGSPKAQSVTQAVIGLASQLGYRVVAEGIETHDTFHLLQAWGCHEGQGYLIAQPMLPEQLEDWLRR.

The 130-residue stretch at 28 to 157 (DEVFEEILAA…LEHFARLVMA (130 aa)) folds into the GAF domain. The region spanning 192–327 (GALTVIAADL…GVGWARYNPP (136 aa)) is the GGDEF domain. Positions 335 to 587 (AFTLLTSLSQ…PEQLEDWLRR (253 aa)) constitute an EAL domain.

The catalysed reaction is 3',3'-c-di-GMP + H2O = 5'-phosphoguanylyl(3'-&gt;5')guanosine + H(+). Functionally, phosphodiesterase (PDE) that catalyzes the hydrolysis of cyclic diguanylate (c-di-GMP) to 5'-pGpG. The polypeptide is Cyclic di-GMP phosphodiesterase PA2567 (Pseudomonas aeruginosa (strain ATCC 15692 / DSM 22644 / CIP 104116 / JCM 14847 / LMG 12228 / 1C / PRS 101 / PAO1)).